The following is a 221-amino-acid chain: Ribonuclease HII (221 aa).

The region spanning 29–220 (RRVAGVDEVG…LRDLQAGEIG (192 aa)) is the RNase H type-2 domain. A divalent metal cation contacts are provided by Asp-35, Glu-36, and Asp-129. The segment at 198 to 221 (LGPSPQHRRSFAPLRDLQAGEIGG) is disordered.

Belongs to the RNase HII family. Mn(2+) is required as a cofactor. Mg(2+) serves as cofactor.

The protein localises to the cytoplasm. The enzyme catalyses Endonucleolytic cleavage to 5'-phosphomonoester.. In terms of biological role, endonuclease that specifically degrades the RNA of RNA-DNA hybrids. In Synechococcus sp. (strain JA-3-3Ab) (Cyanobacteria bacterium Yellowstone A-Prime), this protein is Ribonuclease HII.